The chain runs to 192 residues: Signal peptidase complex catalytic subunit sec11 (192 aa).

Residues 1 to 18 (MLSFLSSNLSNTRQSIAQ) lie on the Cytoplasmic side of the membrane. Residues 19–39 (VLNFALVLSTAFMLWKGLSVV) form a helical; Signal-anchor for type II membrane protein membrane-spanning segment. The Lumenal portion of the chain corresponds to 40-192 (TASSSPIVVV…MGLMVILQRE (153 aa)). Active-site charge relay system residues include S53, H92, and D134. The interval 178-189 (VLLGIMGLMVIL) is C-terminal short (CTS) helix.

Belongs to the peptidase S26B family. Component of the signal peptidase complex (SPC) composed of a catalytic subunit SEC11 and three accessory subunits SPC1, SPC2 and SPC3. The complex induces a local thinning of the ER membrane which is used to measure the length of the signal peptide (SP) h-region of protein substrates. This ensures the selectivity of the complex towards h-regions shorter than 18-20 amino acids. SPC associates with the translocon complex.

The protein localises to the endoplasmic reticulum membrane. The catalysed reaction is Cleavage of hydrophobic, N-terminal signal or leader sequences from secreted and periplasmic proteins.. Its function is as follows. Catalytic component of the signal peptidase complex (SPC) which catalyzes the cleavage of N-terminal signal sequences from nascent proteins as they are translocated into the lumen of the endoplasmic reticulum. Specifically cleaves N-terminal signal peptides that contain a hydrophobic alpha-helix (h-region) shorter than 18-20 amino acids. In Emericella nidulans (strain FGSC A4 / ATCC 38163 / CBS 112.46 / NRRL 194 / M139) (Aspergillus nidulans), this protein is Signal peptidase complex catalytic subunit sec11 (sec11).